Here is a 188-residue protein sequence, read N- to C-terminus: dCTP deaminase (188 aa).

DCTP is bound by residues 111–116, 135–137, Q156, Y170, and Q180; these read KSTYAR and TLE. E137 (proton donor/acceptor) is an active-site residue.

It belongs to the dCTP deaminase family. Homotrimer.

The catalysed reaction is dCTP + H2O + H(+) = dUTP + NH4(+). The protein operates within pyrimidine metabolism; dUMP biosynthesis; dUMP from dCTP (dUTP route): step 1/2. In terms of biological role, catalyzes the deamination of dCTP to dUTP. In Azoarcus sp. (strain BH72), this protein is dCTP deaminase.